Consider the following 372-residue polypeptide: Glutamate 5-kinase (372 aa).

An ATP-binding site is contributed by lysine 14. The substrate site is built by serine 54, aspartate 141, and asparagine 153. Residue 173 to 174 (TD) participates in ATP binding. The region spanning 280–358 (RGHVVIDDGA…GEIESVLGYM (79 aa)) is the PUA domain.

Belongs to the glutamate 5-kinase family.

The protein resides in the cytoplasm. It catalyses the reaction L-glutamate + ATP = L-glutamyl 5-phosphate + ADP. It participates in amino-acid biosynthesis; L-proline biosynthesis; L-glutamate 5-semialdehyde from L-glutamate: step 1/2. In terms of biological role, catalyzes the transfer of a phosphate group to glutamate to form L-glutamate 5-phosphate. This is Glutamate 5-kinase from Paraburkholderia xenovorans (strain LB400).